A 3371-amino-acid chain; its full sequence is Protocadherin-23 (3371 aa).

Residues M1–G40 form a disordered region. Over M1–S46 the chain is Cytoplasmic. The helical transmembrane segment at L47–F67 threads the bilayer. Cadherin domains lie at Q65–F167, P168–F296, E297–I413, A424–F539, S540–F663, W664–F771, N772–Y881, E877–F979, L980–W1082, E1085–F1191, L1192–F1294, P1299–N1415, S1404–F1510, Q1511–F1620, F1620–F1724, K1725–F1829, I1830–F1933, P1934–L2038, E2039–M2130, S2140–F2242, E2243–F2347, F2347–F2447, S2448–F2549, T2550–F2665, S2666–F2769, M2770–F2880, and T2881–A2988. Over N68–P2986 the chain is Extracellular. 8 N-linked (GlcNAc...) asparagine glycosylation sites follow: N669, N772, N814, N905, N966, N1038, N1172, and N1275. 4 N-linked (GlcNAc...) asparagine glycosylation sites follow: N1487, N1595, N1617, and N1664. N1898 is a glycosylation site (N-linked (GlcNAc...) asparagine). 3 N-linked (GlcNAc...) asparagine glycosylation sites follow: N2054, N2070, and N2098. N2329 is a glycosylation site (N-linked (GlcNAc...) asparagine). N-linked (GlcNAc...) asparagine glycosylation is found at N2479, N2497, N2555, and N2664. N-linked (GlcNAc...) asparagine glycans are attached at residues N2929 and N2977. Residues L2987–L3017 traverse the membrane as a helical segment. The Cytoplasmic portion of the chain corresponds to R3018–I3371. Positions K3117–D3140 are enriched in basic and acidic residues. The disordered stretch occupies residues K3117–Q3141.

As to expression, cerebral cortex and testis.

It localises to the membrane. In terms of biological role, calcium-dependent cell-adhesion protein. The sequence is that of Protocadherin-23 (DCHS2) from Homo sapiens (Human).